A 757-amino-acid polypeptide reads, in one-letter code: uncharacterized protein (757 aa).

This is an uncharacterized protein from Dictyostelium discoideum (Social amoeba).